The sequence spans 336 residues: HTH-type transcriptional regulator CdhR (336 aa).

The 99-residue stretch at 213–311 (VQVIGEMERH…AASPSQDRAV (99 aa)) folds into the HTH araC/xylS-type domain. DNA-binding regions (H-T-H motif) lie at residues 230–251 (LELA…RVHL) and 278–301 (VLQV…RARF). The tract at residues 305–336 (PSQDRAVLPLKAPAATPPGAPAGHRTPRAERG) is disordered.

Induces the transcription of the PA5384-PA5388 operon in response to carnitine. This operon is involved in the degradation of L-carnitine, and allows P.aeruginosa to grow on L-carnitine as the sole source of carbon and nitrogen. The protein is HTH-type transcriptional regulator CdhR (cdhR) of Pseudomonas aeruginosa (strain ATCC 15692 / DSM 22644 / CIP 104116 / JCM 14847 / LMG 12228 / 1C / PRS 101 / PAO1).